The following is a 145-amino-acid chain: Bacilliredoxin GK1781 (145 aa).

Belongs to the bacilliredoxin family.

This Geobacillus kaustophilus (strain HTA426) protein is Bacilliredoxin GK1781.